A 240-amino-acid chain; its full sequence is Sugar fermentation stimulation protein homolog (240 aa).

Belongs to the SfsA family.

This Saccharolobus islandicus (strain M.16.4 / Kamchatka #3) (Sulfolobus islandicus) protein is Sugar fermentation stimulation protein homolog.